We begin with the raw amino-acid sequence, 39 residues long: Conotoxin Cl14.5 (39 aa).

The propeptide occupies 1–16 (PVNEAGVERLFRALVG). Pro38 bears the Proline amide mark.

In terms of processing, contains 2 disulfide bonds. In terms of tissue distribution, expressed by the venom duct.

The protein resides in the secreted. The chain is Conotoxin Cl14.5 from Californiconus californicus (California cone).